The primary structure comprises 236 residues: Small ribosomal subunit protein eS6 (236 aa).

Residues Ser232 and Ser233 each carry the phosphoserine modification.

This sequence belongs to the eukaryotic ribosomal protein eS6 family. In terms of processing, phosphorylated.

This is Small ribosomal subunit protein eS6 (RPS6) from Eremothecium gossypii (strain ATCC 10895 / CBS 109.51 / FGSC 9923 / NRRL Y-1056) (Yeast).